Here is a 278-residue protein sequence, read N- to C-terminus: HTH-type transcriptional activator RhaS (278 aa).

The region spanning 174–272 (NLLLAWLEDH…NWSPRDIRQG (99 aa)) is the HTH araC/xylS-type domain. 2 consecutive DNA-binding regions (H-T-H motif) follow at residues 191 to 212 (DAVA…KQQT) and 239 to 262 (VTDI…RREF).

Binds DNA as a dimer.

Its subcellular location is the cytoplasm. Activates expression of the rhaBAD and rhaT operons. This is HTH-type transcriptional activator RhaS from Escherichia coli O6:H1 (strain CFT073 / ATCC 700928 / UPEC).